A 224-amino-acid polypeptide reads, in one-letter code: Peroxiredoxin-6 (224 aa).

The region spanning 5–169 is the Thioredoxin domain; sequence LLLGDEAPNF…ILRVIISLQL (165 aa). A required and sufficient for targeting to lysosomes and lamellar bodies region spans residues 31–40; it reads DSWGILFSHP. At threonine 44 the chain carries Phosphothreonine. The active-site Cysteine sulfenic acid (-SOH) intermediate; for peroxidase activity is the cysteine 47. Residue lysine 63 is modified to N6-acetyllysine. Tyrosine 89 is modified (phosphotyrosine). Aspartate 140 acts as the For phospholipase activity in catalysis. A Phosphothreonine; by MAPK modification is found at threonine 177. Lysine 209 is modified (N6-acetyllysine; alternate). Lysine 209 carries the post-translational modification N6-succinyllysine; alternate.

This sequence belongs to the peroxiredoxin family. Prx6 subfamily. Homodimer. Interacts with GSTP1; mediates PRDX6 glutathionylation and regeneration. Interacts with APEX1. Interacts with STH. May interact with FAM168B. May interact with HTR2A. The cofactor is Does not need Ca(2+) as cofactor.. In terms of processing, irreversibly inactivated by overoxidation of Cys-47 to sulfinic acid (Cys-SO(2)H) and sulfonic acid (Cys-SO(3)H) forms upon oxidative stress. Post-translationally, phosphorylation at Thr-177 by MAP kinases increases the phospholipase activity of the enzyme. The phosphorylated form exhibits a greater lysophosphatidylcholine acyltransferase activity compared to the non-phosphorylated form.

It localises to the cytoplasm. The protein resides in the lysosome. It catalyses the reaction a hydroperoxide + 2 glutathione = an alcohol + glutathione disulfide + H2O. It carries out the reaction a 1,2-diacyl-sn-glycero-3-phosphocholine + H2O = a 1-acyl-sn-glycero-3-phosphocholine + a fatty acid + H(+). The enzyme catalyses a 1-acyl-sn-glycero-3-phosphocholine + an acyl-CoA = a 1,2-diacyl-sn-glycero-3-phosphocholine + CoA. The catalysed reaction is 1-hexadecanoyl-sn-glycero-3-phosphocholine + hexadecanoyl-CoA = 1,2-dihexadecanoyl-sn-glycero-3-phosphocholine + CoA. It catalyses the reaction 1,2-dihexadecanoyl-sn-glycero-3-phosphocholine + H2O = 1-hexadecanoyl-sn-glycero-3-phosphocholine + hexadecanoate + H(+). Its function is as follows. Thiol-specific peroxidase that catalyzes the reduction of hydrogen peroxide and organic hydroperoxides to water and alcohols, respectively. Can reduce H(2)O(2) and short chain organic, fatty acid, and phospholipid hydroperoxides. Also has phospholipase activity, and can therefore either reduce the oxidized sn-2 fatty acyl group of phospholipids (peroxidase activity) or hydrolyze the sn-2 ester bond of phospholipids (phospholipase activity). These activities are dependent on binding to phospholipids at acidic pH and to oxidized phospholipds at cytosolic pH. Plays a role in cell protection against oxidative stress by detoxifying peroxides and in phospholipid homeostasis. Exhibits acyl-CoA-dependent lysophospholipid acyltransferase which mediates the conversion of lysophosphatidylcholine (1-acyl-sn-glycero-3-phosphocholine or LPC) into phosphatidylcholine (1,2-diacyl-sn-glycero-3-phosphocholine or PC). Shows a clear preference for LPC as the lysophospholipid and for palmitoyl CoA as the fatty acyl substrate. This is Peroxiredoxin-6 (PRDX6) from Bos taurus (Bovine).